A 153-amino-acid chain; its full sequence is uncharacterized protein (153 aa).

This sequence belongs to the RusA family.

This is an uncharacterized protein from Xylella fastidiosa (strain Temecula1 / ATCC 700964).